The chain runs to 1187 residues: uncharacterized protein (1187 aa).

Residues 38 to 57 (KNNQDIPTSNTNISPKPISQ) are compositionally biased toward polar residues. Disordered regions lie at residues 38 to 127 (KNNQ…NSPT), 189 to 215 (ISRS…IHLN), 248 to 287 (TQPP…SQLQ), 358 to 415 (NNNS…NSNS), 443 to 490 (FPNN…INNN), 536 to 689 (QFPF…SSLN), 752 to 840 (SINN…NKSI), and 1079 to 1187 (HNNN…NLQK). Composition is skewed to low complexity over residues 71–84 (KPIV…STLI), 104–124 (PSSS…SIPN), 190–215 (SRSS…IHLN), and 248–274 (TQPP…QAPH). The segment covering 443 to 455 (FPNNTDENYPSDH) has biased composition (polar residues). 6 stretches are compositionally biased toward low complexity: residues 458-490 (NDNN…INNN), 543-570 (TTES…SSSA), 585-653 (INNL…SNIN), 662-689 (PNSP…SSLN), 752-790 (SINN…TTNN), and 797-809 (NYKI…NIDN). The segment covering 815–832 (NDDDNDDDDDDDVDDNDD) has biased composition (acidic residues). 2 stretches are compositionally biased toward low complexity: residues 1079 to 1149 (HNNN…PSNN) and 1156 to 1174 (KNNN…NNTN).

This is an uncharacterized protein from Dictyostelium discoideum (Social amoeba).